The following is an 88-amino-acid chain: Small ribosomal subunit protein bS20 (88 aa).

Positions Met-1–Met-27 are disordered.

Belongs to the bacterial ribosomal protein bS20 family.

In terms of biological role, binds directly to 16S ribosomal RNA. This chain is Small ribosomal subunit protein bS20, found in Shewanella frigidimarina (strain NCIMB 400).